The primary structure comprises 321 residues: Transaldolase (321 aa).

Lysine 132 functions as the Schiff-base intermediate with substrate in the catalytic mechanism.

Belongs to the transaldolase family. Type 1 subfamily. As to quaternary structure, homodimer.

The protein localises to the cytoplasm. The enzyme catalyses D-sedoheptulose 7-phosphate + D-glyceraldehyde 3-phosphate = D-erythrose 4-phosphate + beta-D-fructose 6-phosphate. Its pathway is carbohydrate degradation; pentose phosphate pathway; D-glyceraldehyde 3-phosphate and beta-D-fructose 6-phosphate from D-ribose 5-phosphate and D-xylulose 5-phosphate (non-oxidative stage): step 2/3. Its function is as follows. Transaldolase is important for the balance of metabolites in the pentose-phosphate pathway. In Rhizobium rhizogenes (strain K84 / ATCC BAA-868) (Agrobacterium radiobacter), this protein is Transaldolase.